The sequence spans 288 residues: Stomatin (288 aa).

A disordered region spans residues 1-22 (MAEKRHTRDSEAQRLPDSFKDS). Topologically, residues 1–25 (MAEKRHTRDSEAQRLPDSFKDSPSK) are cytoplasmic. Ser-10 is modified (phosphoserine; by PKA). Residue Ser-18 is modified to Phosphoserine. The stretch at 26–54 (GLGPCGWILVAFSFLFTVITFPISIWMCI) is an intramembrane region. Cys-30 is lipidated: S-palmitoyl cysteine. Topologically, residues 55-288 (KIIKEYERAI…IIGAKHSHLG (234 aa)) are cytoplasmic. Cys-87 carries S-palmitoyl cysteine; partial lipidation. Phosphoserine is present on residues Ser-161 and Ser-244. A required for homooligomerization region spans residues 265 to 273 (STIVFPLPI). Residues 267–269 (IVF) are required for lipid raft association. The tract at residues 273–287 (IDMLQGIIGAKHSHL) is interaction with LANCL1.

Belongs to the band 7/mec-2 family. As to quaternary structure, homodimer and higher order homooligomer. The homodimer is banana-shaped. Interacts with ASIC1, ASIC2 and ASIC3. Interacts with LANCL1. Interacts with SLC2A1. Interacts with SLC4A1; this interaction positively regulates SLC4A1 activity. Identified in large complexes with SLC40A1, SLC14A1, SLC29A1 and AQP1. Interacts with STOML1; may redistribute STOM from the plasma membrane to late endosomes. As to expression, detected in erythrocytes (at protein level). Widely expressed.

It is found in the cell membrane. Its subcellular location is the cytoplasm. It localises to the cytoskeleton. The protein resides in the membrane raft. The protein localises to the melanosome. It is found in the cytoplasmic vesicle. Regulates ion channel activity and transmembrane ion transport. Regulates ASIC2 and ASIC3 channel activity. The sequence is that of Stomatin from Homo sapiens (Human).